A 660-amino-acid polypeptide reads, in one-letter code: FAST kinase domain-containing protein 3, mitochondrial (660 aa).

Residues 1-57 constitute a mitochondrion transit peptide; the sequence is MALVTLRRNLYHLSDFRIHGALAALKTQQVNHVHKTVKEHLCPWFWSQHPGPIRVRF. Residues 591-649 enclose the RAP domain; it reads VALCIDGPKRFCLNSKHLLGKEATKQRHLRLLGYQVVQIPYYEIEMLKSRLELVDYLQG.

This sequence belongs to the FAST kinase family.

The protein resides in the mitochondrion. Required for normal mitochondrial respiration. Increases steady-state levels and half-lives of a subset of mature mitochondrial mRNAs MT-ND2, MT-ND3, MT-CYTB, MT-CO2, and MT-ATP8/6. Promotes MT-CO1 mRNA translation and increases mitochondrial complex IV assembly and activity. The sequence is that of FAST kinase domain-containing protein 3, mitochondrial (FASTKD3) from Bos taurus (Bovine).